We begin with the raw amino-acid sequence, 139 residues long: Nucleoside diphosphate kinase (139 aa).

ATP-binding residues include K11, F59, R87, T93, R104, and N114. The active-site Pros-phosphohistidine intermediate is the H117.

This sequence belongs to the NDK family. As to quaternary structure, homotetramer. Mg(2+) is required as a cofactor.

It localises to the cytoplasm. It catalyses the reaction a 2'-deoxyribonucleoside 5'-diphosphate + ATP = a 2'-deoxyribonucleoside 5'-triphosphate + ADP. It carries out the reaction a ribonucleoside 5'-diphosphate + ATP = a ribonucleoside 5'-triphosphate + ADP. Functionally, major role in the synthesis of nucleoside triphosphates other than ATP. The ATP gamma phosphate is transferred to the NDP beta phosphate via a ping-pong mechanism, using a phosphorylated active-site intermediate. The chain is Nucleoside diphosphate kinase from Coxiella burnetii (strain CbuK_Q154) (Coxiella burnetii (strain Q154)).